The primary structure comprises 512 residues: Glycerol kinase (512 aa).

Thr-14 is a binding site for ADP. ATP contacts are provided by Thr-14, Thr-15, and Ser-16. Thr-14 provides a ligand contact to sn-glycerol 3-phosphate. An ADP-binding site is contributed by Arg-18. Sn-glycerol 3-phosphate-binding residues include Arg-83, Glu-84, Tyr-135, and Asp-244. Glycerol is bound by residues Arg-83, Glu-84, Tyr-135, Asp-244, and Gln-245. ADP contacts are provided by Thr-266, Gly-309, Gly-410, and Asn-414. Residues Thr-266, Gly-309, and Gly-410 each coordinate ATP.

The protein belongs to the FGGY kinase family.

It carries out the reaction glycerol + ATP = sn-glycerol 3-phosphate + ADP + H(+). It functions in the pathway polyol metabolism; glycerol degradation via glycerol kinase pathway; sn-glycerol 3-phosphate from glycerol: step 1/1. Its activity is regulated as follows. Inhibited by fructose 1,6-bisphosphate (FBP). Its function is as follows. Key enzyme in the regulation of glycerol uptake and metabolism. Catalyzes the phosphorylation of glycerol to yield sn-glycerol 3-phosphate. This chain is Glycerol kinase, found in Gluconobacter oxydans (strain 621H) (Gluconobacter suboxydans).